The sequence spans 238 residues: 7-cyano-7-deazaguanine synthase (238 aa).

Position 14-24 (14-24 (FSGGQDSATCL)) interacts with ATP. 4 residues coordinate Zn(2+): C202, C217, C220, and C223.

It belongs to the QueC family. Zn(2+) is required as a cofactor.

The enzyme catalyses 7-carboxy-7-deazaguanine + NH4(+) + ATP = 7-cyano-7-deazaguanine + ADP + phosphate + H2O + H(+). It participates in purine metabolism; 7-cyano-7-deazaguanine biosynthesis. Functionally, catalyzes the ATP-dependent conversion of 7-carboxy-7-deazaguanine (CDG) to 7-cyano-7-deazaguanine (preQ(0)). The chain is 7-cyano-7-deazaguanine synthase from Nitrobacter hamburgensis (strain DSM 10229 / NCIMB 13809 / X14).